The sequence spans 558 residues: Small ribosomal subunit protein bS1 (558 aa).

S1 motif domains lie at 21-87, 105-171, 192-260, 277-347, 364-434, and 451-520; these read GSII…LSRE, SETV…VSRR, GMHV…LGLK, ETKL…LGLK, GVHV…LGIK, and GAII…LTIH.

It belongs to the bacterial ribosomal protein bS1 family.

In terms of biological role, binds mRNA; thus facilitating recognition of the initiation point. It is needed to translate mRNA with a short Shine-Dalgarno (SD) purine-rich sequence. The sequence is that of Small ribosomal subunit protein bS1 (rpsA) from Buchnera aphidicola subsp. Acyrthosiphon pisum (strain APS) (Acyrthosiphon pisum symbiotic bacterium).